The primary structure comprises 450 residues: 3-phosphoshikimate 1-carboxyvinyltransferase (450 aa).

The 3-phosphoshikimate site is built by lysine 28, serine 29, and arginine 33. Lysine 28 contributes to the phosphoenolpyruvate binding site. Phosphoenolpyruvate is bound by residues glycine 100 and arginine 128. Serine 173, glutamine 175, aspartate 326, and lysine 353 together coordinate 3-phosphoshikimate. Residue glutamine 175 participates in phosphoenolpyruvate binding. The active-site Proton acceptor is the aspartate 326. Phosphoenolpyruvate-binding residues include arginine 357 and arginine 402.

Belongs to the EPSP synthase family. In terms of assembly, monomer.

The protein resides in the cytoplasm. It catalyses the reaction 3-phosphoshikimate + phosphoenolpyruvate = 5-O-(1-carboxyvinyl)-3-phosphoshikimate + phosphate. The protein operates within metabolic intermediate biosynthesis; chorismate biosynthesis; chorismate from D-erythrose 4-phosphate and phosphoenolpyruvate: step 6/7. Its function is as follows. Catalyzes the transfer of the enolpyruvyl moiety of phosphoenolpyruvate (PEP) to the 5-hydroxyl of shikimate-3-phosphate (S3P) to produce enolpyruvyl shikimate-3-phosphate and inorganic phosphate. The protein is 3-phosphoshikimate 1-carboxyvinyltransferase of Brucella melitensis biotype 1 (strain ATCC 23456 / CCUG 17765 / NCTC 10094 / 16M).